The chain runs to 73 residues: V-type proton ATPase subunit e (73 aa).

Residues M1–S3 lie on the Lumenal side of the membrane. A helical transmembrane segment spans residues F4–M24. The Cytoplasmic segment spans residues A25 to S35. The chain crosses the membrane as a helical span at residues T36–L56. The Lumenal portion of the chain corresponds to H57–E73.

It belongs to the V-ATPase e1/e2 subunit family. V-ATPase is a heteromultimeric enzyme composed of a peripheral catalytic V1 complex (components A to H) attached to an integral membrane V0 proton pore complex (components: a, c, c', c'', d, e, f and VOA1).

It localises to the vacuole membrane. Its function is as follows. Subunit of the V0 complex of vacuolar(H+)-ATPase (V-ATPase), a multisubunit enzyme composed of a peripheral complex (V1) that hydrolyzes ATP and a membrane integral complex (V0) that translocates protons. V-ATPase is responsible for acidifying and maintaining the pH of intracellular compartments. This Saccharomyces cerevisiae (strain ATCC 204508 / S288c) (Baker's yeast) protein is V-type proton ATPase subunit e (VMA9).